The sequence spans 336 residues: Isopentenyl-diphosphate delta-isomerase (336 aa).

5 to 6 is a binding site for substrate; sequence RK. Residues 60–62, Ser-90, and Asn-117 contribute to the FMN site; that span reads AMT. Gln-147 is a binding site for substrate. Glu-148 serves as a coordination point for Mg(2+). FMN contacts are provided by residues Lys-179, Ser-204, Thr-209, 253-255, and 274-275; these read GVR and SR.

The protein belongs to the IPP isomerase type 2 family. Homooctamer. Dimer of tetramers. FMN is required as a cofactor. Requires NADPH as cofactor. Mg(2+) serves as cofactor.

The protein localises to the cytoplasm. It catalyses the reaction isopentenyl diphosphate = dimethylallyl diphosphate. In terms of biological role, involved in the biosynthesis of isoprenoids. Catalyzes the 1,3-allylic rearrangement of the homoallylic substrate isopentenyl (IPP) to its allylic isomer, dimethylallyl diphosphate (DMAPP). The chain is Isopentenyl-diphosphate delta-isomerase from Streptococcus pneumoniae (strain 70585).